A 493-amino-acid polypeptide reads, in one-letter code: Probable UTP--glucose-1-phosphate uridylyltransferase (493 aa).

UTP is bound by residues L105–K108, Q181, G211, and D242. G107–K108 lines the substrate pocket. N240–D242 is a substrate binding site.

Belongs to the UDPGP type 1 family.

The catalysed reaction is alpha-D-glucose 1-phosphate + UTP + H(+) = UDP-alpha-D-glucose + diphosphate. Functionally, plays a central role as a glucosyl donor in cellular metabolic pathways. The polypeptide is Probable UTP--glucose-1-phosphate uridylyltransferase (Saccharomyces cerevisiae (strain ATCC 204508 / S288c) (Baker's yeast)).